Here is a 1099-residue protein sequence, read N- to C-terminus: Glutamine--fructose-6-phosphate aminotransferase [isomerizing] (1099 aa).

Cysteine 2 (nucleophile; for GATase activity) is an active-site residue. The region spanning 2 to 71 is the Glutamine amidotransferase type-2; first part domain; it reads CGIIGYIGND…DIDGNIGIGH (70 aa). Positions 198–253 constitute an HTH cro/C1-type domain; sequence LRKVREKLGLTRKDVEKLCGVKEIYIVKIETGKLESIEEERLKKLCSLYGINFEEI. Residues 278–413 form the DOD-type homing endonuclease domain; it reads IIGYIIGDGH…IQFLLLRFGI (136 aa). In terms of domain architecture, Glutamine amidotransferase type-2; second part spans 571 to 723; sequence SRWATHGNVC…DGDVVVIKKK (153 aa). 2 SIS domains span residues 786-923 and 948-1089; these read LAKC…LLGR and TIKE…VDKP. Catalysis depends on lysine 1094, which acts as the For Fru-6P isomerization activity.

It in the C-terminal section; belongs to the SIS family. GFAT subfamily. As to quaternary structure, homodimer. In terms of processing, this protein undergoes a protein self splicing that involves a post-translational excision of the intervening region (intein) followed by peptide ligation.

The protein resides in the cytoplasm. The enzyme catalyses D-fructose 6-phosphate + L-glutamine = D-glucosamine 6-phosphate + L-glutamate. In terms of biological role, catalyzes the first step in hexosamine metabolism, converting fructose-6P into glucosamine-6P using glutamine as a nitrogen source. The sequence is that of Glutamine--fructose-6-phosphate aminotransferase [isomerizing] (glmS) from Methanocaldococcus jannaschii (strain ATCC 43067 / DSM 2661 / JAL-1 / JCM 10045 / NBRC 100440) (Methanococcus jannaschii).